The primary structure comprises 208 residues: Uracil phosphoribosyltransferase (208 aa).

Residues Arg77, Arg102, and 129–137 (DPMLATGNS) contribute to the 5-phospho-alpha-D-ribose 1-diphosphate site. Uracil-binding positions include Ile193 and 198–200 (GDA). 5-phospho-alpha-D-ribose 1-diphosphate is bound at residue Asp199.

Belongs to the UPRTase family. It depends on Mg(2+) as a cofactor.

The enzyme catalyses UMP + diphosphate = 5-phospho-alpha-D-ribose 1-diphosphate + uracil. It participates in pyrimidine metabolism; UMP biosynthesis via salvage pathway; UMP from uracil: step 1/1. Allosterically activated by GTP. In terms of biological role, catalyzes the conversion of uracil and 5-phospho-alpha-D-ribose 1-diphosphate (PRPP) to UMP and diphosphate. The polypeptide is Uracil phosphoribosyltransferase (Mycoplasmopsis agalactiae (strain NCTC 10123 / CIP 59.7 / PG2) (Mycoplasma agalactiae)).